A 1429-amino-acid chain; its full sequence is MEEHTFGVQQIQPNVISVRLFKRKVGGLGFLVKERVSKPPVIISDLIRGGAAEQSGLIQAGDIILAVNDRPLVDLSYDSALEVLRGIASETHVVLILRGPEGFTTHLETTFTGDGTPKTIRVTQPLGTPTKAVDLSRQPSASKDQPLAVDRVPGPSNGPQHAQGRGQGAGSVSQANGVAIDPTMKNTKANLQDSGEQDELLKEIEPVLSILTGGGKAVNRGGPAKAEMKDTGIQVDRDLDGKLHKAPPLGGENDRVFNDLWGKGNVPVVLNNPYSENEQSPASGKQSPTKNGSPSRCPRFLKVKNWETDVVLTDTLHLKSTLETGCTEQICMGSIMLPSHHIRKSEDVRTKDQLFPLAKEFLDQYYSSIKRFGSKAHMDRLEEVNKEIESTSTYQLKDTELIYGAKHAWRNASRCVGRIQWSKLQVFDARDCTTAHGMFNYICNHVKYATNKGNLRSAITIFPQRTDGKHDFRVWNSQLIRYAGYKQPDGSTLGDPANVEFTEICIQQGWKPPRGRFDVLPLLLQANGNDPELFQIPPELVLEVPIRHPKFDWFKDLGLKWYGLPAVSNMLLEIGGLEFSACPFSGWYMGTEIGVRDYCDNSRYNILEEVAKKMDLDMRKTSSLWKDQALVEINIAVLYSFQSDKVTIVDHHSATESFIKHMENEYRCRGGCPADWVWIVPPMSGSITPVFHQEMLNYRLTPSFEYQPDPWNTHVWKGTNGTPTKRRAIGFKKLAEAVKFSAKLMGQAMAKRVKATILYATETGKSQAYAKTLCEIFKHAFDAKAMSMEEYDIVHLEHEALVLVVTSTFGNGDPPENGEKFGCALMEMRHPNSVQEERKSYKVRFNSVSSYSDSRKSSGDGPDLRDNFESTGPLANVRFSVFGLGSRAYPHFCAFGHAVDTLLEELGGERILKMREGDELCGQEEAFRTWAKKVFKAACDVFCVGDDVNIEKANNSLISNDRSWKRNKFRLTYVAEAPELTQGLSNVHKKRVSAARLLSRQNLQSPKSSRSTIFVRLHTNGNQELQYQPGDHLGVFPGNHEDLVNALIERLEDAPPANHVVKVEMLEERNTALGVISNWKDESRLPPCTIFQAFKYYLDITTPPTPLQLQQFASLATNEKEKQRLLVLSKGLQEYEEWKWGKNPTMVEVLEEFPSIQMPATLLLTQLSLLQPRYYSISSSPDMYPDEVHLTVAIVSYHTRDGEGPVHHGVCSSWLNRIQADDVVPCFVRGAPSFHLPRNPQVPCILVGPGTGIAPFRSFWQQRQFDIQHKGMNPCPMVLVFGCRQSKIDHIYREETLQAKNKGVFRELYTAYSREPDRPKKYVQDVLQEQLAESVYRALKEQGGHIYVCGDVTMAADVLKAIQRIMTQQGKLSEEDAGVFISRLRDDNRYHEDIFGVTLRTYEVTNRLRSESIAFIEESKKDTDEVFSS.

The segment at 1-200 (MEEHTFGVQQ…LQDSGEQDEL (200 aa)) is interaction with NOSIP. One can recognise a PDZ domain in the interval 17-99 (SVRLFKRKVG…ETHVVLILRG (83 aa)). Disordered stretches follow at residues 114 to 174 (DGTP…SVSQ) and 271 to 298 (NNPY…SRCP). An interaction with DYNLL1/PIN region spans residues 163-240 (QGRGQGAGSV…TGIQVDRDLD (78 aa)). Residues 272-294 (NPYSENEQSPASGKQSPTKNGSP) are compositionally biased toward polar residues. The residue at position 280 (S280) is a Phosphoserine. S334 is a binding site for (6R)-L-erythro-5,6,7,8-tetrahydrobiopterin. C415 is a heme b binding site. Residues Q478, W587, Y588, and E592 each contribute to the L-arginine site. Positions 677, 678, and 691 each coordinate (6R)-L-erythro-5,6,7,8-tetrahydrobiopterin. Y706 provides a ligand contact to heme b. The interval 725–745 (KRRAIGFKKLAEAVKFSAKLM) is calmodulin-binding. Residues 755-935 (ATILYATETG…AFRTWAKKVF (181 aa)) enclose the Flavodoxin-like domain. Positions 761, 762, 763, 765, 766, 807, 808, and 812 each coordinate FMN. S847, S857, and S858 each carry phosphoserine. FMN contacts are provided by S886, H891, C893, E919, and Q923. The FAD-binding FR-type domain occupies 990-1237 (KRVSAARLLS…VRGAPSFHLP (248 aa)). R1010 contacts NADP(+). Residues H1032, R1173, Y1174, Y1175, S1176, T1191, and A1193 each coordinate FAD. S1196 lines the NADP(+) pocket. FAD is bound by residues Y1197, V1210, C1211, and S1212. NADP(+)-binding residues include T1251, R1284, S1313, R1314, K1320, Y1322, Q1324, D1357, T1398, and R1400.

Belongs to the NOS family. Homodimer. Interacts with DLG4; the interaction possibly being prevented by the association between NOS1 and CAPON. Forms a ternary complex with CAPON and RASD1. Forms a ternary complex with CAPON and SYN1. Interacts with ZDHHC23. Interacts with NOSIP; which may impair its synaptic location. Interacts with HTR4. Interacts with VAC14. Interacts (via N-terminal domain) with DLG4 (via N-terminal tandem pair of PDZ domains). Interacts with SLC6A4. Forms a complex with ASL, ASS1 and SLC7A1; the complex regulates cell-autonomous L-arginine synthesis and citrulline recycling while channeling extracellular L-arginine to nitric oxide synthesis pathway. Interacts with DMD; localizes NOS1 to sarcolemma in muscle cells. Interacts with DYNLL1; inhibits the nitric oxide synthase activity. Heme b is required as a cofactor. The cofactor is FAD. Requires FMN as cofactor. It depends on (6R)-L-erythro-5,6,7,8-tetrahydrobiopterin as a cofactor. Post-translationally, ubiquitinated; mediated by STUB1/CHIP in the presence of Hsp70 and Hsp40 (in vitro). In terms of tissue distribution, widely expressed in the nervous system: expressed in cerebrum, olfactory bulb, hippocampus, midbrain, cerebellum, pons, medulla oblongata, and spinal cord. Also found in skeletal muscle, where it is localized beneath the sarcolemma of fast twitch muscle fibers, and in spleen, heart, kidney, and liver. N-NOS-1 and N-NOS-2 are found in all parts of the nervous system. NNOS beta and gamma occur in a region-specific manner in the brain and NNOS beta expression is developmentally regulated. NNOS Mu is only found in mature skeletal and cardiac muscles.

The protein resides in the cell membrane. Its subcellular location is the sarcolemma. It is found in the cell projection. The protein localises to the dendritic spine. The enzyme catalyses 2 L-arginine + 3 NADPH + 4 O2 + H(+) = 2 L-citrulline + 2 nitric oxide + 3 NADP(+) + 4 H2O. Its activity is regulated as follows. Stimulated by calcium/calmodulin. Inhibited by DYNLL1 that prevents the dimerization of the protein. Inhibited by NOSIP. Produces nitric oxide (NO) which is a messenger molecule with diverse functions throughout the body. In the brain and peripheral nervous system, NO displays many properties of a neurotransmitter. Probably has nitrosylase activity and mediates cysteine S-nitrosylation of cytoplasmic target proteins such SRR. Isoform NNOS Mu may be an effector enzyme for the dystrophin complex. The chain is Nitric oxide synthase 1 from Mus musculus (Mouse).